Here is a 233-residue protein sequence, read N- to C-terminus: 2-C-methyl-D-erythritol 4-phosphate cytidylyltransferase (233 aa).

It belongs to the IspD/TarI cytidylyltransferase family. IspD subfamily.

It catalyses the reaction 2-C-methyl-D-erythritol 4-phosphate + CTP + H(+) = 4-CDP-2-C-methyl-D-erythritol + diphosphate. Its pathway is isoprenoid biosynthesis; isopentenyl diphosphate biosynthesis via DXP pathway; isopentenyl diphosphate from 1-deoxy-D-xylulose 5-phosphate: step 2/6. Its function is as follows. Catalyzes the formation of 4-diphosphocytidyl-2-C-methyl-D-erythritol from CTP and 2-C-methyl-D-erythritol 4-phosphate (MEP). This Syntrophotalea carbinolica (strain DSM 2380 / NBRC 103641 / GraBd1) (Pelobacter carbinolicus) protein is 2-C-methyl-D-erythritol 4-phosphate cytidylyltransferase.